A 667-amino-acid polypeptide reads, in one-letter code: Endogenous retrovirus group K member 5 Gag polyprotein (667 aa).

The N-myristoyl glycine moiety is linked to residue Gly-2. The interval 166 to 188 is disordered; that stretch reads KGPELVGPSESKPRGPSPLPAGQ. CCHC-type zinc fingers lie at residues 543–560 and 580–597; these read KKCYNCGQIGHLKRSCPV and GLCPKCGKGKHWANQCHS. The interval 598 to 667 is disordered; that stretch reads KFDKDGQPLS…CPAPQQAAPQ (70 aa). The span at 648–667 shows a compositional bias: polar residues; sequence GVSQLQQSNSCPAPQQAAPQ.

Belongs to the beta type-B retroviral Gag protein family. HERV class-II K(HML-2) gag subfamily. Myristoylation is essential for retroviral assembly. Alteration of the glycine residue leads to a block in the budding of particles and an accumulation of Gag inside the cell. Post-translationally, specific enzymatic cleavages may yield mature proteins.

The protein resides in the cell membrane. The products of the Gag polyproteins of infectious retroviruses perform highly complex orchestrated tasks during the assembly, budding, maturation, and infection stages of the viral replication cycle. During viral assembly, the proteins form membrane associations and self-associations that ultimately result in budding of an immature virion from the infected cell. Gag precursors also function during viral assembly to selectively bind and package two plus strands of genomic RNA. Endogenous Gag proteins may have kept, lost or modified their original function during evolution. The polypeptide is Endogenous retrovirus group K member 5 Gag polyprotein (ERVK-5) (Homo sapiens (Human)).